We begin with the raw amino-acid sequence, 337 residues long: Terpene cyclase (337 aa).

The chain crosses the membrane as a helical span at residues 5 to 25; that stretch reads ASVIFLSLSVLAAVGVWGPFV. Asn65 carries an N-linked (GlcNAc...) asparagine glycan. The next 7 helical transmembrane spans lie at 72 to 92, 111 to 131, 149 to 169, 177 to 197, 222 to 242, 267 to 287, and 298 to 318; these read IAYC…VILC, GLLS…MSFI, ALIL…LNVL, IWGI…ARII, VAGG…LGIF, LQVD…HELI, and LGGL…AAAW.

The protein belongs to the membrane-bound ascI terpene cyclase family.

The protein resides in the membrane. Its pathway is antifungal biosynthesis. Cyclase; part of the gene cluster that mediates the biosynthesis of the tetrahydropyranyl antifungal agent lanomycin that acts as an inhibitor of CYP51 and blocks the ergosterol biosynthesis. The biosynthesis probably begins with the formation of an hexaketide, followed by methionine mediated alkylation of C-2 and C-6, and methylation of the reduced C-3 oxygen, pyran forming reductive ring closure, oxygenation of C-4, beta-keto reduction, enoyl reduction and dehydration of the remaining oxygens, and finally, acylation with glycine to complete the biosynthesis. This Pyrenophora dematioidea (Helminthosporium dematioideum) protein is Terpene cyclase.